Reading from the N-terminus, the 170-residue chain is Shikimate kinase (170 aa).

An ATP-binding site is contributed by Gly15 to Thr20. Thr19 serves as a coordination point for Mg(2+). Residues Asp37, Arg61, and Gly83 each coordinate substrate. Arg121 lines the ATP pocket. Arg140 lines the substrate pocket.

This sequence belongs to the shikimate kinase family. In terms of assembly, monomer. Mg(2+) is required as a cofactor.

It is found in the cytoplasm. The enzyme catalyses shikimate + ATP = 3-phosphoshikimate + ADP + H(+). Its pathway is metabolic intermediate biosynthesis; chorismate biosynthesis; chorismate from D-erythrose 4-phosphate and phosphoenolpyruvate: step 5/7. Its function is as follows. Catalyzes the specific phosphorylation of the 3-hydroxyl group of shikimic acid using ATP as a cosubstrate. This chain is Shikimate kinase, found in Neisseria gonorrhoeae (strain ATCC 700825 / FA 1090).